Reading from the N-terminus, the 217-residue chain is Small ribosomal subunit protein uS3 (217 aa).

In terms of domain architecture, KH type-2 spans 40-110 (IRDLINKGFN…EVYINIHEVR (71 aa)).

It belongs to the universal ribosomal protein uS3 family. Part of the 30S ribosomal subunit. Forms a tight complex with proteins S10 and S14.

Its function is as follows. Binds the lower part of the 30S subunit head. Binds mRNA in the 70S ribosome, positioning it for translation. In Rickettsia africae (strain ESF-5), this protein is Small ribosomal subunit protein uS3.